A 220-amino-acid chain; its full sequence is Elongation factor Ts, chloroplastic (220 aa).

Belongs to the EF-Ts family.

The protein resides in the plastid. It localises to the chloroplast. In terms of biological role, associates with the EF-Tu.GDP complex and induces the exchange of GDP to GTP. It remains bound to the aminoacyl-tRNA.EF-Tu.GTP complex up to the GTP hydrolysis stage on the ribosome. The sequence is that of Elongation factor Ts, chloroplastic (tsf) from Pyropia yezoensis (Susabi-nori).